The sequence spans 148 residues: SsrA-binding protein (148 aa).

Residues 128–148 (ESIAKKDQERNLKREFKNNNR) form a disordered region.

It belongs to the SmpB family.

The protein localises to the cytoplasm. Its function is as follows. Required for rescue of stalled ribosomes mediated by trans-translation. Binds to transfer-messenger RNA (tmRNA), required for stable association of tmRNA with ribosomes. tmRNA and SmpB together mimic tRNA shape, replacing the anticodon stem-loop with SmpB. tmRNA is encoded by the ssrA gene; the 2 termini fold to resemble tRNA(Ala) and it encodes a 'tag peptide', a short internal open reading frame. During trans-translation Ala-aminoacylated tmRNA acts like a tRNA, entering the A-site of stalled ribosomes, displacing the stalled mRNA. The ribosome then switches to translate the ORF on the tmRNA; the nascent peptide is terminated with the 'tag peptide' encoded by the tmRNA and targeted for degradation. The ribosome is freed to recommence translation, which seems to be the essential function of trans-translation. This chain is SsrA-binding protein, found in Fusobacterium nucleatum subsp. nucleatum (strain ATCC 25586 / DSM 15643 / BCRC 10681 / CIP 101130 / JCM 8532 / KCTC 2640 / LMG 13131 / VPI 4355).